We begin with the raw amino-acid sequence, 193 residues long: Bcl-2-like protein 2 (193 aa).

Ala2 is subject to N-acetylalanine. The short motif at 9–29 (DTRALVADFVGYKLRQKGYVC) is the BH4 element. The BH1 signature appears at 85 to 104 (ELFQGGPNWGRLVAFFVFGA). The BH2 motif lies at 136–151 (DWIHSSGGWAEFTALY).

This sequence belongs to the Bcl-2 family. In terms of assembly, interacts with HIF3A isoform 2 (via C-terminus domain). Interacts with BOP. Expressed in almost all myeloid cell lines and in a wide range of tissues, with highest levels in brain, colon, and salivary gland.

It localises to the mitochondrion membrane. Promotes cell survival. Blocks dexamethasone-induced apoptosis. Mediates survival of postmitotic Sertoli cells by suppressing death-promoting activity of BAX. The polypeptide is Bcl-2-like protein 2 (Bcl2l2) (Mus musculus (Mouse)).